A 253-amino-acid chain; its full sequence is LexA repressor (253 aa).

Residues 26 to 46 (FDEMKDALNLRSKSGIHRLIS) constitute a DNA-binding region (H-T-H motif). Positions 73-97 (MPAATGKPPLAESGPPPVTAPATDE) are disordered. Residues serine 174 and lysine 212 each act as for autocatalytic cleavage activity in the active site.

This sequence belongs to the peptidase S24 family. In terms of assembly, homodimer.

It carries out the reaction Hydrolysis of Ala-|-Gly bond in repressor LexA.. In terms of biological role, represses a number of genes involved in the response to DNA damage (SOS response), including recA and lexA. In the presence of single-stranded DNA, RecA interacts with LexA causing an autocatalytic cleavage which disrupts the DNA-binding part of LexA, leading to derepression of the SOS regulon and eventually DNA repair. In Gluconacetobacter diazotrophicus (strain ATCC 49037 / DSM 5601 / CCUG 37298 / CIP 103539 / LMG 7603 / PAl5), this protein is LexA repressor.